Here is a 231-residue protein sequence, read N- to C-terminus: tRNA (guanine-N(1)-)-methyltransferase (231 aa).

Residues glycine 111 and 131-136 (LGNYVL) each bind S-adenosyl-L-methionine.

The protein belongs to the RNA methyltransferase TrmD family. In terms of assembly, homodimer.

The protein localises to the cytoplasm. It catalyses the reaction guanosine(37) in tRNA + S-adenosyl-L-methionine = N(1)-methylguanosine(37) in tRNA + S-adenosyl-L-homocysteine + H(+). In terms of biological role, specifically methylates guanosine-37 in various tRNAs. The protein is tRNA (guanine-N(1)-)-methyltransferase of Leptospira interrogans serogroup Icterohaemorrhagiae serovar copenhageni (strain Fiocruz L1-130).